The sequence spans 346 residues: 2,5-dichlorohydroquinone reductive dechlorinase (346 aa).

A GST N-terminal domain is found at proline 43–threonine 154. In terms of domain architecture, GST C-terminal spans aspartate 189–proline 335.

The protein belongs to the GST superfamily.

It catalyses the reaction 2,5-dichlorohydroquinone + 2 glutathione = chlorohydroquinone + glutathione disulfide + chloride + H(+). The enzyme catalyses chlorohydroquinone + 2 glutathione = hydroquinone + glutathione disulfide + chloride + H(+). It functions in the pathway xenobiotic degradation; gamma-hexachlorocyclohexane degradation. Catalyzes the degradation of 2,5-dichlorohydroquinone (2,5-DCHQ) into hydroquinone (HQ) via chlorohydroquinone (CHQ). This Sphingobium indicum (strain DSM 16412 / CCM 7286 / MTCC 6364 / B90A) protein is 2,5-dichlorohydroquinone reductive dechlorinase.